The sequence spans 107 residues: SKSSTGTPPSYNQLNYNENLMRFFKSKPVTVGKEESMAVEQSYNDVELQRDPSPDQCCDYSGESGSAGNLSSGSNVQMEIITNGSNTGTGTSSGSFQPPLLTEALLN.

Positions 81–107 are disordered; it reads ITNGSNTGTGTSSGSFQPPLLTEALLN. The segment covering 82-95 has biased composition (low complexity); sequence TNGSNTGTGTSSGS.

In terms of assembly, forms a heterodimer with timeless (TIM); the complex then translocates into the nucleus. In terms of processing, phosphorylated with a circadian rhythmicity, probably by the double-time protein (dbt). Phosphorylation could be implicated in the stability of per monomer and in the formation of heterodimer per-tim.

It localises to the nucleus. The protein localises to the cytoplasm. The protein resides in the perinuclear region. Essential for biological clock functions. Determines the period length of circadian and ultradian rhythms; an increase in PER dosage leads to shortened circadian rhythms and a decrease leads to lengthened circadian rhythms. Essential for the circadian rhythmicity of locomotor activity, eclosion behavior, and for the rhythmic component of the male courtship song that originates in the thoracic nervous system. The biological cycle depends on the rhythmic formation and nuclear localization of the TIM-PER complex. Light induces the degradation of TIM, which promotes elimination of PER. Nuclear activity of the heterodimer coordinatively regulates PER and TIM transcription through a negative feedback loop. Behaves as a negative element in circadian transcriptional loop. Does not appear to bind DNA, suggesting indirect transcriptional inhibition. The polypeptide is Period circadian protein (per) (Beris vallata (Common orange legionnaire)).